A 528-amino-acid polypeptide reads, in one-letter code: Protein spinster homolog 1 (528 aa).

The disordered stretch occupies residues 1 to 49 (MAGSDTAPFLSQADDPDDGPVPGTPGLPGSTGNPKSEEPEVPDQEGLQR). The residue at position 2 (A2) is an N-acetylalanine. The next 12 helical transmembrane spans lie at 50 to 70 (ITGLSPGRSALIVAVLCYINL), 98 to 118 (GLIQTVFISSYMVLAPVFGYL), 127 to 147 (LMCGGIAFWSLVTLGSSFIPG), 160 to 180 (VGVGEASYSTIAPTLIADLFV), 187 to 207 (MLSIFYFAIPVGSGLGYIAGS), 218 to 238 (WALRVTPGLGVVAVLLLFLVV), 278 to 298 (LGFTAVAFVTGSLALWAPAFL), 323 to 343 (LIFGLITCLTGVLGVGLGVEI), 357 to 377 (LVCATGLLGSAPFLFLSLACA), 381 to 401 (IVATYIFIFIGETLLSMNWAI), 421 to 441 (FQIVLSHLLGDAGSPYLIGLI), and 465 to 485 (MLCAFVGALGGAAFLGTAIFI). S518 is modified (phosphoserine).

The protein belongs to the major facilitator superfamily. Spinster (TC 2.A.1.49) family. In terms of assembly, interacts with BCL2 and BCL2L1.

Its subcellular location is the lysosome membrane. The protein resides in the mitochondrion inner membrane. It carries out the reaction a 1-acyl-sn-glycero-3-phosphocholine(out) + H(+)(out) = a 1-acyl-sn-glycero-3-phosphocholine(in) + H(+)(in). The enzyme catalyses 1-hexadecanoyl-sn-glycero-3-phosphocholine(out) + H(+)(out) = 1-hexadecanoyl-sn-glycero-3-phosphocholine(in) + H(+)(in). The catalysed reaction is 1-(9Z-octadecenoyl)-sn-glycero-3-phosphocholine(out) + H(+)(out) = 1-(9Z-octadecenoyl)-sn-glycero-3-phosphocholine(in) + H(+)(in). It catalyses the reaction 1-(5Z,8Z,11Z,14Z-eicosatetraenoyl)-sn-glycero-3-phosphocholine(out) + H(+)(out) = 1-(5Z,8Z,11Z,14Z-eicosatetraenoyl)-sn-glycero-3-phosphocholine(in) + H(+)(in). It carries out the reaction 1-(4Z,7Z,10Z,13Z,16Z,19Z-docosahexaenoyl)-sn-glycero-3-phosphocholine(out) + H(+)(out) = 1-(4Z,7Z,10Z,13Z,16Z,19Z-docosahexaenoyl)-sn-glycero-3-phosphocholine(in) + H(+)(in). The enzyme catalyses a 1-acyl-sn-glycero-3-phosphoethanolamine(out) + H(+)(out) = a 1-acyl-sn-glycero-3-phosphoethanolamine(in) + H(+)(in). The catalysed reaction is 1-(9Z-octadecenoyl)-sn-glycero-3-phosphoethanolamine(out) + H(+)(out) = 1-(9Z-octadecenoyl)-sn-glycero-3-phosphoethanolamine(in) + H(+)(in). It catalyses the reaction 1-acyl-sn-glycero-3-phospho-(1'-sn-glycerol)(out) + H(+)(out) = 1-acyl-sn-glycero-3-phospho-(1'-sn-glycerol)(in) + H(+)(in). It carries out the reaction 1-(9Z-octadecenoyl)-sn-glycero-3-phospho-(1'-sn-glycerol)(out) + H(+)(out) = 1-(9Z-octadecenoyl)-sn-glycero-3-phospho-(1'-sn-glycerol)(in) + H(+)(in). The enzyme catalyses a 1-O-(1Z-alkenyl)-sn-glycero-3-phosphocholine(out) + H(+)(out) = a 1-O-(1Z-alkenyl)-sn-glycero-3-phosphocholine(in) + H(+)(in). The catalysed reaction is 1-(1Z-hexadecenyl)-sn-glycero-3-phosphocholine(out) + H(+)(out) = 1-(1Z-hexadecenyl)-sn-glycero-3-phosphocholine(in) + H(+)(in). It catalyses the reaction a 1-O-(1Z-alkenyl)-sn-glycero-3-phosphoethanolamine(out) + H(+)(out) = a 1-O-(1Z-alkenyl)-sn-glycero-3-phosphoethanolamine(in) + H(+)(in). It carries out the reaction 1-O-(1Z-hexadecenyl)-sn-glycero-3-phosphoethanolamine(out) + H(+)(out) = 1-O-(1Z-hexadecenyl)-sn-glycero-3-phosphoethanolamine(in) + H(+)(in). Its function is as follows. Plays a critical role in the phospholipid salvage pathway from lysosomes to the cytosol. Mediates the rate-limiting, proton-dependent, lysosomal efflux of lysophospholipids, which can then be reacylated by acyltransferases in the endoplasmic reticulum to form phospholipids. Selective for zwitterionic headgroups such as lysophosphatidylcholine (LPC) and lysophosphatidylethanolamine (LPE), can also transport lysophosphatidylglycerol (LPG), but not other anionic lysophospholipids, sphingosine, nor sphingomyelin. Transports lysophospholipids with saturated, monounsaturated, and polyunsaturated fatty acids, such as 1-hexadecanoyl-sn-glycero-3-phosphocholine, 1-(9Z-octadecenoyl)-sn-glycero-3-phosphocholine and 1-(4Z,7Z,10Z,13Z,16Z,19Z-docosahexaenoyl)-sn-glycero-3-phosphocholine, respectively. Can also transport lysoplasmalogen (LPC with a fatty alcohol) such as 1-(1Z-hexadecenyl)-sn-glycero-3-phosphocholine. Lysosomal LPC could function as intracellular signaling messenger. Essential player in lysosomal homeostasis. Crucial for cell survival under conditions of nutrient limitation. May be involved in necrotic or autophagic cell death. The polypeptide is Protein spinster homolog 1 (SPNS1) (Homo sapiens (Human)).